The primary structure comprises 266 residues: Putative carbamate hydrolase RutD (266 aa).

The AB hydrolase-1 domain maps to 14 to 115 (PVVVLISGLG…TVLISVNGWL (102 aa)).

This sequence belongs to the AB hydrolase superfamily. Hydrolase RutD family.

It carries out the reaction carbamate + 2 H(+) = NH4(+) + CO2. Involved in pyrimidine catabolism. May facilitate the hydrolysis of carbamate, a reaction that can also occur spontaneously. The sequence is that of Putative carbamate hydrolase RutD from Shigella sonnei (strain Ss046).